Here is a 323-residue protein sequence, read N- to C-terminus: Methionyl-tRNA formyltransferase (323 aa).

Ser-118–Pro-121 provides a ligand contact to (6S)-5,6,7,8-tetrahydrofolate.

It belongs to the Fmt family.

It carries out the reaction L-methionyl-tRNA(fMet) + (6R)-10-formyltetrahydrofolate = N-formyl-L-methionyl-tRNA(fMet) + (6S)-5,6,7,8-tetrahydrofolate + H(+). Attaches a formyl group to the free amino group of methionyl-tRNA(fMet). The formyl group appears to play a dual role in the initiator identity of N-formylmethionyl-tRNA by promoting its recognition by IF2 and preventing the misappropriation of this tRNA by the elongation apparatus. The chain is Methionyl-tRNA formyltransferase from Buchnera aphidicola subsp. Baizongia pistaciae (strain Bp).